The chain runs to 144 residues: Putative sugar phosphate isomerase RC0402 (144 aa).

Histidine 12 provides a ligand contact to substrate. Histidine 101 (proton donor) is an active-site residue. Position 135 (arginine 135) interacts with substrate.

The protein belongs to the LacAB/RpiB family.

The chain is Putative sugar phosphate isomerase RC0402 from Rickettsia conorii (strain ATCC VR-613 / Malish 7).